A 148-amino-acid chain; its full sequence is UPF0260 protein YPK_2117 (148 aa).

Belongs to the UPF0260 family.

This is UPF0260 protein YPK_2117 from Yersinia pseudotuberculosis serotype O:3 (strain YPIII).